Consider the following 702-residue polypeptide: Methionine--tRNA ligase (702 aa).

A 'HIGH' region motif is present at residues 14–24; sequence PYANGPVHLGH. Zn(2+)-binding residues include Cys-146, Cys-149, Cys-159, and Cys-162. The short motif at 344–348 is the 'KMSKS' region element; it reads KFSKS. An ATP-binding site is contributed by Lys-347. The 102-residue stretch at 601–702 folds into the tRNA-binding domain; it reads EFLKVDLRVA…GKEINGKKIQ (102 aa).

Belongs to the class-I aminoacyl-tRNA synthetase family. MetG type 1 subfamily. As to quaternary structure, homodimer. Requires Zn(2+) as cofactor.

It localises to the cytoplasm. It catalyses the reaction tRNA(Met) + L-methionine + ATP = L-methionyl-tRNA(Met) + AMP + diphosphate. Is required not only for elongation of protein synthesis but also for the initiation of all mRNA translation through initiator tRNA(fMet) aminoacylation. This is Methionine--tRNA ligase from Chlorobium phaeobacteroides (strain DSM 266 / SMG 266 / 2430).